Reading from the N-terminus, the 300-residue chain is GTPase Era (300 aa).

The region spanning Lys-6 to Glu-173 is the Era-type G domain. The segment at Gly-14–Ser-21 is G1. Residue Gly-14–Ser-21 coordinates GTP. Residues Gln-40–Asn-44 are G2. The segment at Asp-61–Gly-64 is G3. GTP-binding positions include Asp-61–Ile-65 and Asn-123–Asp-126. Positions Asn-123–Asp-126 are G4. The tract at residues Ile-152–Ala-154 is G5. Residues Thr-204–Lys-281 enclose the KH type-2 domain.

This sequence belongs to the TRAFAC class TrmE-Era-EngA-EngB-Septin-like GTPase superfamily. Era GTPase family. As to quaternary structure, monomer.

Its subcellular location is the cytoplasm. The protein localises to the cell membrane. Functionally, an essential GTPase that binds both GDP and GTP, with rapid nucleotide exchange. Plays a role in 16S rRNA processing and 30S ribosomal subunit biogenesis and possibly also in cell cycle regulation and energy metabolism. The protein is GTPase Era of Enterococcus faecalis (strain ATCC 700802 / V583).